The following is a 328-amino-acid chain: tRNA uridine(34) hydroxylase (328 aa).

The Rhodanese domain maps to 122 to 218 (QENRCLVLDV…YGLKMGTGKW (97 aa)). The active-site Cysteine persulfide intermediate is Cys-178.

The protein belongs to the TrhO family.

It carries out the reaction uridine(34) in tRNA + AH2 + O2 = 5-hydroxyuridine(34) in tRNA + A + H2O. Catalyzes oxygen-dependent 5-hydroxyuridine (ho5U) modification at position 34 in tRNAs. The sequence is that of tRNA uridine(34) hydroxylase from Chlamydia muridarum (strain MoPn / Nigg).